The primary structure comprises 872 residues: Alanine--tRNA ligase (872 aa).

H567, H571, C669, and H673 together coordinate Zn(2+).

The protein belongs to the class-II aminoacyl-tRNA synthetase family. The cofactor is Zn(2+).

Its subcellular location is the cytoplasm. It carries out the reaction tRNA(Ala) + L-alanine + ATP = L-alanyl-tRNA(Ala) + AMP + diphosphate. Its function is as follows. Catalyzes the attachment of alanine to tRNA(Ala) in a two-step reaction: alanine is first activated by ATP to form Ala-AMP and then transferred to the acceptor end of tRNA(Ala). Also edits incorrectly charged Ser-tRNA(Ala) and Gly-tRNA(Ala) via its editing domain. The protein is Alanine--tRNA ligase of Streptococcus pneumoniae (strain CGSP14).